The sequence spans 323 residues: MNYLTTTNYCFPCQTHLYHGKVRDVYTVGSDMLVIIATDRISAFDVVLSRGIPYKGQVLNQIAAKFLDSTSDILPNWKLAEPDPMVTIGLLCEPFKVEMVIRGYLTGSAWRKYKEGERTLCAVTLPEGMKENEKFPNPIITPTTKAYKGHDENISKEEIIERFLVSKEDYEQLEYYTRALFQRGTEIASSKGLILVDTKYEFGKKDGRIYLIDEIHTPDSSRYFYSEDYQERFEKGEGQKQLSKEFVRQWLMKQNFQGKEGQIVPEMTPEYCQIVSERYIELYETIVGEQFIRASTSNISARIKKNIETYLMNKEQVKWNNMV.

Belongs to the SAICAR synthetase family.

It catalyses the reaction 5-amino-1-(5-phospho-D-ribosyl)imidazole-4-carboxylate + L-aspartate + ATP = (2S)-2-[5-amino-1-(5-phospho-beta-D-ribosyl)imidazole-4-carboxamido]succinate + ADP + phosphate + 2 H(+). Its pathway is purine metabolism; IMP biosynthesis via de novo pathway; 5-amino-1-(5-phospho-D-ribosyl)imidazole-4-carboxamide from 5-amino-1-(5-phospho-D-ribosyl)imidazole-4-carboxylate: step 1/2. The polypeptide is Phosphoribosylaminoimidazole-succinocarboxamide synthase (Azobacteroides pseudotrichonymphae genomovar. CFP2).